The following is a 392-amino-acid chain: Autophagy-related protein 21 (392 aa).

WD repeat units follow at residues 200 to 240 and 250 to 289; these read VHQS…NDEP and SRPS…TEAD. A L/FRRG motif motif is present at residues 246-250; it reads FRRGS.

It belongs to the WD repeat PROPPIN family.

Its subcellular location is the cytoplasm. The protein resides in the membrane. It is found in the vacuole membrane. Its function is as follows. Required for cytoplasm to vacuole transport (Cvt) vesicles formation and mitophagy. Involved in binding of phosphatidylethanolamine to ATG8 and in recruitment of ATG8 and ATG5 to the pre-autophagosomal structure. Protects ATG8 from ARG4-mediated cleavage. In Kluyveromyces lactis (strain ATCC 8585 / CBS 2359 / DSM 70799 / NBRC 1267 / NRRL Y-1140 / WM37) (Yeast), this protein is Autophagy-related protein 21 (ATG21).